A 346-amino-acid chain; its full sequence is Biotin synthase (346 aa).

Residues 38–256 (RQVQVSTLLS…IAVARIMMPT (219 aa)) form the Radical SAM core domain. Residues Cys53, Cys57, and Cys60 each contribute to the [4Fe-4S] cluster site. 4 residues coordinate [2Fe-2S] cluster: Cys97, Cys128, Cys188, and Arg260.

This sequence belongs to the radical SAM superfamily. Biotin synthase family. As to quaternary structure, homodimer. [4Fe-4S] cluster serves as cofactor. Requires [2Fe-2S] cluster as cofactor.

The catalysed reaction is (4R,5S)-dethiobiotin + (sulfur carrier)-SH + 2 reduced [2Fe-2S]-[ferredoxin] + 2 S-adenosyl-L-methionine = (sulfur carrier)-H + biotin + 2 5'-deoxyadenosine + 2 L-methionine + 2 oxidized [2Fe-2S]-[ferredoxin]. The protein operates within cofactor biosynthesis; biotin biosynthesis; biotin from 7,8-diaminononanoate: step 2/2. Its function is as follows. Catalyzes the conversion of dethiobiotin (DTB) to biotin by the insertion of a sulfur atom into dethiobiotin via a radical-based mechanism. This Shigella boydii serotype 18 (strain CDC 3083-94 / BS512) protein is Biotin synthase.